We begin with the raw amino-acid sequence, 278 residues long: Large ribosomal subunit protein uL2 (278 aa).

The tract at residues arginine 218 to lysine 278 is disordered.

Belongs to the universal ribosomal protein uL2 family. In terms of assembly, part of the 50S ribosomal subunit. Forms a bridge to the 30S subunit in the 70S ribosome.

Its function is as follows. One of the primary rRNA binding proteins. Required for association of the 30S and 50S subunits to form the 70S ribosome, for tRNA binding and peptide bond formation. It has been suggested to have peptidyltransferase activity; this is somewhat controversial. Makes several contacts with the 16S rRNA in the 70S ribosome. This is Large ribosomal subunit protein uL2 from Rhizobium etli (strain ATCC 51251 / DSM 11541 / JCM 21823 / NBRC 15573 / CFN 42).